Reading from the N-terminus, the 21-residue chain is DYE-linked aldehyde dehydrogenase, gamma chain (21 aa).

Heterotetramer composed of an alpha, a beta and two gamma chains. Requires [2Fe-2S] cluster as cofactor.

Active with aldehydes and formate esters as substrates. This is DYE-linked aldehyde dehydrogenase, gamma chain from Amycolatopsis methanolica.